The primary structure comprises 522 residues: 2-isopropylmalate synthase (522 aa).

The 263-residue stretch at 5–267 (VIIFDTTLRD…DCGINAKEIH (263 aa)) folds into the Pyruvate carboxyltransferase domain. Residues D14, H202, H204, and N238 each coordinate Mn(2+). The segment at 392–522 (QLQHMMVHSD…IHKERELGGV (131 aa)) is regulatory domain.

The protein belongs to the alpha-IPM synthase/homocitrate synthase family. LeuA type 1 subfamily. In terms of assembly, homodimer. The cofactor is Mn(2+).

It is found in the cytoplasm. It catalyses the reaction 3-methyl-2-oxobutanoate + acetyl-CoA + H2O = (2S)-2-isopropylmalate + CoA + H(+). The protein operates within amino-acid biosynthesis; L-leucine biosynthesis; L-leucine from 3-methyl-2-oxobutanoate: step 1/4. Its function is as follows. Catalyzes the condensation of the acetyl group of acetyl-CoA with 3-methyl-2-oxobutanoate (2-ketoisovalerate) to form 3-carboxy-3-hydroxy-4-methylpentanoate (2-isopropylmalate). In Shewanella frigidimarina (strain NCIMB 400), this protein is 2-isopropylmalate synthase.